A 266-amino-acid chain; its full sequence is Ribosomal RNA small subunit methyltransferase A (266 aa).

S-adenosyl-L-methionine-binding residues include His-13, Leu-15, Gly-40, Glu-61, Asp-85, and Asn-104.

The protein belongs to the class I-like SAM-binding methyltransferase superfamily. rRNA adenine N(6)-methyltransferase family. RsmA subfamily.

Its subcellular location is the cytoplasm. It carries out the reaction adenosine(1518)/adenosine(1519) in 16S rRNA + 4 S-adenosyl-L-methionine = N(6)-dimethyladenosine(1518)/N(6)-dimethyladenosine(1519) in 16S rRNA + 4 S-adenosyl-L-homocysteine + 4 H(+). Specifically dimethylates two adjacent adenosines (A1518 and A1519) in the loop of a conserved hairpin near the 3'-end of 16S rRNA in the 30S particle. May play a critical role in biogenesis of 30S subunits. This chain is Ribosomal RNA small subunit methyltransferase A, found in Parabacteroides distasonis (strain ATCC 8503 / DSM 20701 / CIP 104284 / JCM 5825 / NCTC 11152).